The sequence spans 247 residues: Small ribosomal subunit protein uS2 (247 aa).

It belongs to the universal ribosomal protein uS2 family.

This chain is Small ribosomal subunit protein uS2, found in Ralstonia pickettii (strain 12J).